The primary structure comprises 212 residues: Thymidylate kinase (212 aa).

An ATP-binding site is contributed by 10–17; that stretch reads GLEGAGKT.

It belongs to the thymidylate kinase family.

The enzyme catalyses dTMP + ATP = dTDP + ADP. Functionally, phosphorylation of dTMP to form dTDP in both de novo and salvage pathways of dTTP synthesis. This Photorhabdus laumondii subsp. laumondii (strain DSM 15139 / CIP 105565 / TT01) (Photorhabdus luminescens subsp. laumondii) protein is Thymidylate kinase.